The following is a 653-amino-acid chain: MPASRLRDRAASSASGSTCGSMSQTHPVLESGLLASAGCSAPRGPRKGGPAPVDRKAKASAMPDSPAEVKTQPRSTPPSMPPPPPAASQGATRPPSFTPHTHREDGPATLPHGRFHGCLKWSMVCLLMNGSSHSPTAINGAPCTPNGFSNGPATSSTASLSTQHLPPACGARQLSKLKRFLTTLQQFGSDISPEIGERVRTLVLGLVNSTLTIEEFHSKLQEATNFPLRPFVIPFLKANLPLLQRELLHCARLAKQTPAQYLAQHEQLLLDASASSPIDSSELLLEVNENGKRRTPDRTKENGSDRDPLHPEHLSKRPCTLNPAQRYSPSNGPPQPTPPPHYRLEDIAMAHHFRDAYRHPDPRELRERHRPLVVPGSRQEEVIDHKLTEREWAEEWKHLNNLLNCIMDMVEKTRRSLTVLRRCQEADREELNHWARRYSDAEDTKKGPAPAAARPRSSSAGPEGPQLDVPREFLPRTLTGYVPEDIWRKAEEAVNEVKRQAMSELQKAVSDAERKAHELITTERAKMERALAEAKRQASEDALTVINQQEDSSESCWNCGRKASETCSGCNAARYCGSFCQHRDWEKHHHVCGQSLQGPTAVVADPVPGPPEAAHSLGPSLPVGAASPSEAGSAGPSRPGSPSPPGPLDTVPR.

Positions 1-10 (MPASRLRDRA) are enriched in basic and acidic residues. Residues 1–109 (MPASRLRDRA…HTHREDGPAT (109 aa)) form a disordered region. Positions 1-127 (MPASRLRDRA…CLKWSMVCLL (127 aa)) are required for nucleolar targeting (in isoform 1). The mediates interaction with PDE7A (in isoform 2) stretch occupies residues 1–430 (MPASRLRDRA…RRCQEADREE (430 aa)). Positions 1–435 (MPASRLRDRA…ADREELNHWA (435 aa)) are mediates localization to the nucleus. Positions 11-23 (ASSASGSTCGSMS) are enriched in low complexity. Positions 75-86 (STPPSMPPPPPA) are enriched in pro residues. The segment at 145 to 242 (PNGFSNGPAT…IPFLKANLPL (98 aa)) is interaction with ZBTB33. The TAFH domain occupies 171–266 (ARQLSKLKRF…TPAQYLAQHE (96 aa)). The tract at residues 176-268 (KLKRFLTTLQ…AQYLAQHEQL (93 aa)) is interaction with HIF1A. A disordered region spans residues 284–342 (LLEVNENGKRRTPDRTKENGSDRDPLHPEHLSKRPCTLNPAQRYSPSNGPPQPTPPPHY). The segment covering 289–315 (ENGKRRTPDRTKENGSDRDPLHPEHLS) has biased composition (basic and acidic residues). Positions 331–341 (NGPPQPTPPPH) are enriched in pro residues. A nervy homology region 2 (NHR2); essential for down-regulation of PFKFB3, PFKFB4 and PDK1 expression region spans residues 394 to 412 (EEWKHLNNLLNCIMDMVEK). Positions 434–446 (WARRYSDAEDTKK) are enriched in basic and acidic residues. The tract at residues 434 to 472 (WARRYSDAEDTKKGPAPAAARPRSSSAGPEGPQLDVPRE) is disordered. Low complexity predominate over residues 447-462 (GPAPAAARPRSSSAGP). Ser457 and Ser459 each carry phosphoserine. Thr479 carries the phosphothreonine modification. Residues 485-506 (DIWRKAEEAVNEVKRQAMSELQ) form a mediates interaction with PRKAR2A region. A nervy homology region 3 (NHR3); essential for down-regulation of PFKFB3, PFKFB4 and PDK1 expression region spans residues 485-533 (DIWRKAEEAVNEVKRQAMSELQKAVSDAERKAHELITTERAKMERALAE). Positions 488 to 543 (RKAEEAVNEVKRQAMSELQKAVSDAERKAHELITTERAKMERALAEAKRQASEDAL) form a coiled coil. Cys556, Cys559, Cys567, Cys570, Cys576, Cys580, His588, and Cys592 together coordinate Zn(2+). An MYND-type zinc finger spans residues 556–592 (CWNCGRKASETCSGCNAARYCGSFCQHRDWEKHHHVC). The interval 603–653 (VADPVPGPPEAAHSLGPSLPVGAASPSEAGSAGPSRPGSPSPPGPLDTVPR) is disordered. Residues 622-638 (PVGAASPSEAGSAGPSR) are compositionally biased toward low complexity. 2 positions are modified to phosphoserine: Ser637 and Ser641. Thr650 bears the Phosphothreonine mark.

Belongs to the CBFA2T family. As to quaternary structure, homooligomer. Homotetramerization is mediated by nervy homology region 2 (NRH2). Can interact with RUNX1T1 and CBFA2T2; heterotetramerization between members of the CBFA2T family is proposed. Component of a TAL-1 complex composed at least of CBFA2T3, LDB1, TAL1 and TCF3. Interacts with ERBB4, HDAC1, HDAC2, HDAC3, HDAC6, HDAC8, NCOR1, NCOR2, and ZNF652. According to PubMed:12242670, may not interact with HDAC6. Interacts with PLXNA1, PLXNA3 and PRKAR1A. Isoform 2 interacts with PRKAR2A, PDE7A and probably PDE4A. Interacts with ZBTB4, ZBTB38 and ZBTB33. Interacts with HIF1A and EGLN1. Interacts with the AML1-MTG8/ETO fusion protein. Widely expressed with higher expression in heart, pancreas, skeletal muscle, spleen, thymus and peripheral blood leukocytes. Expressed in hematopoietic cells (at protein level).

The protein localises to the nucleus. It is found in the nucleolus. The protein resides in the nucleoplasm. It localises to the golgi apparatus membrane. Its function is as follows. Transcriptional corepressor which facilitates transcriptional repression via its association with DNA-binding transcription factors and recruitment of other corepressors and histone-modifying enzymes. Can repress the expression of MMP7 in a ZBTB33-dependent manner. Reduces the protein levels and stability of the transcriptinal regulator HIF1A; interacts with EGLN1 and promotes the HIF1A prolyl hydroxylation-dependent ubiquitination and proteasomal degradation pathway. Contributes to inhibition of glycolysis and stimulation of mitochondrial respiration by down-regulating the expression of glycolytic genes including PFKFB3, PFKFB4, PDK1, PFKP, LDHA and HK1 which are direct targets of HIF1A. Regulates the proliferation and the differentiation of erythroid progenitors by repressing the expression of TAL1 target genes. Plays a role in granulocyte differentiation. Functionally, isoform 2 functions as an A-kinase-anchoring protein. This is Protein CBFA2T3 (CBFA2T3) from Homo sapiens (Human).